The sequence spans 525 residues: Mitochondrial-processing peptidase subunit alpha (525 aa).

The N-terminal 33 residues, 1–33, are a transit peptide targeting the mitochondrion; that stretch reads MAAMVLAATRLLRGSGSWGRSRPRFGDPAYRRF. At lysine 64 the chain carries N6-succinyllysine. Lysine 299 carries the post-translational modification N6-acetyllysine.

It belongs to the peptidase M16 family. As to quaternary structure, heterodimer of PMPCA (alpha) and PMPCB (beta) subunits, forming the mitochondrial processing protease (MPP) in which PMPCA is involved in substrate recognition and binding and PMPCB is the catalytic subunit.

The protein resides in the mitochondrion matrix. The protein localises to the mitochondrion inner membrane. Functionally, substrate recognition and binding subunit of the essential mitochondrial processing protease (MPP), which cleaves the mitochondrial sequence off newly imported precursors proteins. In Bos taurus (Bovine), this protein is Mitochondrial-processing peptidase subunit alpha (PMPCA).